The primary structure comprises 126 residues: MSKLEKLVEELSALSVLEAADLSKLLEEKWGVSAAAPVAAAGPAAAAAPAEAAEEQTEFTVVLTAGGDKKINVIKEVRGVRPDLGLKEAKDLVEGAPQNVVENVSKQVAEEIAKKLTEAGATVQVK.

The protein belongs to the bacterial ribosomal protein bL12 family. In terms of assembly, homodimer. Part of the ribosomal stalk of the 50S ribosomal subunit. Forms a multimeric L10(L12)X complex, where L10 forms an elongated spine to which 2 to 4 L12 dimers bind in a sequential fashion. Binds GTP-bound translation factors.

Its function is as follows. Forms part of the ribosomal stalk which helps the ribosome interact with GTP-bound translation factors. Is thus essential for accurate translation. The polypeptide is Large ribosomal subunit protein bL12 (Caulobacter sp. (strain K31)).